The following is a 182-amino-acid chain: Nudix hydrolase 17, mitochondrial (182 aa).

The transit peptide at Met-1 to Gln-26 directs the protein to the mitochondrion. The Nudix hydrolase domain occupies Val-27–Val-158. The short motif at Gly-65 to Gly-86 is the Nudix box element. Mg(2+) is bound by residues Glu-80 and Glu-84.

The protein belongs to the Nudix hydrolase family. Mg(2+) is required as a cofactor. It depends on Mn(2+) as a cofactor. Expressed in roots, leaves, stems and inflorescences.

The protein localises to the mitochondrion. Functionally, probably mediates the hydrolysis of some nucleoside diphosphate derivatives. The protein is Nudix hydrolase 17, mitochondrial (NUDT17) of Arabidopsis thaliana (Mouse-ear cress).